A 188-amino-acid polypeptide reads, in one-letter code: uncharacterized protein (188 aa).

S14 bears the Phosphoserine mark. The segment at 165–188 (RQAMAAKRNRFRKNVRKLPNKKKH) is disordered. Basic residues predominate over residues 171–188 (KRNRFRKNVRKLPNKKKH).

It localises to the nucleus. Its subcellular location is the nucleolus. This is an uncharacterized protein from Schizosaccharomyces pombe (strain 972 / ATCC 24843) (Fission yeast).